The following is a 396-amino-acid chain: Elongation factor Tu (396 aa).

The tr-type G domain maps to 10–205 (KPHVNIGTIG…AVDESIPDPV (196 aa)). Positions 19–26 (GHVDHGKT) are G1. 19–26 (GHVDHGKT) serves as a coordination point for GTP. Residue Thr26 participates in Mg(2+) binding. Residues 62–66 (GITIN) form a G2 region. Residues 83-86 (DAPG) form a G3 region. GTP is bound by residues 83-87 (DAPGH) and 138-141 (NKAD). The tract at residues 138–141 (NKAD) is G4. A G5 region spans residues 175 to 177 (SAL).

The protein belongs to the TRAFAC class translation factor GTPase superfamily. Classic translation factor GTPase family. EF-Tu/EF-1A subfamily. As to quaternary structure, monomer.

Its subcellular location is the cytoplasm. It catalyses the reaction GTP + H2O = GDP + phosphate + H(+). Its function is as follows. GTP hydrolase that promotes the GTP-dependent binding of aminoacyl-tRNA to the A-site of ribosomes during protein biosynthesis. In Mycolicibacterium gilvum (strain PYR-GCK) (Mycobacterium gilvum (strain PYR-GCK)), this protein is Elongation factor Tu.